A 1080-amino-acid polypeptide reads, in one-letter code: ATP-dependent helicase/deoxyribonuclease subunit B (1080 aa).

It belongs to the helicase family. AddB/RexB type 2 subfamily. In terms of assembly, heterodimer of AddA and RexB. Mg(2+) serves as cofactor.

In terms of biological role, the heterodimer acts as both an ATP-dependent DNA helicase and an ATP-dependent, dual-direction single-stranded exonuclease. Recognizes the chi site generating a DNA molecule suitable for the initiation of homologous recombination. This subunit has 5' -&gt; 3' nuclease activity but not helicase activity. This chain is ATP-dependent helicase/deoxyribonuclease subunit B, found in Streptococcus mutans serotype c (strain ATCC 700610 / UA159).